Consider the following 188-residue polypeptide: UPF0398 protein SE_1135 (188 aa).

This sequence belongs to the UPF0398 family.

The polypeptide is UPF0398 protein SE_1135 (Staphylococcus epidermidis (strain ATCC 12228 / FDA PCI 1200)).